Here is a 380-residue protein sequence, read N- to C-terminus: MSKRRMKYHSNNEISYYNFLHSMKDKIVTVYRGGPESKKGKLTAVKSDYIALQAEKKIIYYQLEHVKSITEDTNNSTTTIETEEMLDADDFHSLIGHLINQSVQFNQGGPESKKGRLVWLGDDYAALNTNEDGVVYFNIHHIKSISKHEPDLKIEEQTPVGVLEADDLSEVFKSLTHKWVSINRGGPEAIEGILVDNADGHYTIVKNQEVLRIYPFHIKSISLGPKGSYKKEDQKNEQNQEDNNDKDSNSFISSKSYSSSKSSKRSLKSSDDQSSKSGRSSRSKSSSKSSKRSLKSSDYQSSKSGRSSRSKSSSKSSKRSLKSSDYQSSKSSKRSPRSSDYQSSRSPGYSSSIKSSGKQKEDYSYETIVRTIDYHWKRKF.

Positions 224–364 (GPKGSYKKED…SSGKQKEDYS (141 aa)) are disordered. Basic and acidic residues predominate over residues 229 to 248 (YKKEDQKNEQNQEDNNDKDS). 3 stretches are compositionally biased toward low complexity: residues 275-288 (SKSGRSSRSKSSSK), 296-315 (SSDYQSSKSGRSSRSKSSSK), and 338-356 (SSDYQSSRSPGYSSSIKSS).

The chain is Spore coat protein B (cotB) from Bacillus subtilis (strain 168).